The following is a 394-amino-acid chain: uncharacterized protein (394 aa).

12 consecutive transmembrane segments (helical) span residues 13-33 (LITTIHMVLTTMIHMALTTMI), 35-55 (MAPTTMIHMALTTMIPTVLPT), 73-95 (TTMTLTVPTTMTLTVPTTMTLTV), 110-130 (ALTVPTMTILMALTMMIHMVL), 152-172 (IHMVLTTMIHMALTTMIPTVL), 179-198 (LMVLTMTIRTAPATTMTLTV), 216-236 (VLLATMILTDLPITTTLTVLP), 241-261 (VLMVPTMTILMALTMMIHMVL), 267-287 (VLMVPATTIRMVLTTMIPTVL), 293-313 (VLMVPTTMIHTAPATTMTLTV), 340-360 (MMTLMVHLIEAVVINTVVTTI), and 372-392 (ILLCLDLSMKILCMSCGYVSA).

It localises to the membrane. This is an uncharacterized protein from Saccharomyces cerevisiae (strain ATCC 204508 / S288c) (Baker's yeast).